A 36-amino-acid chain; its full sequence is Photosystem I reaction center subunit VIII (36 aa).

Residues P7–Y29 traverse the membrane as a helical segment.

The protein belongs to the PsaI family.

It is found in the plastid. The protein resides in the chloroplast thylakoid membrane. Its function is as follows. May help in the organization of the PsaL subunit. The chain is Photosystem I reaction center subunit VIII from Gracilaria tenuistipitata var. liui (Red alga).